The following is an 815-amino-acid chain: Translation initiation factor IF-2 (815 aa).

The region spanning 315–482 (ARPPVVTIMG…AISLTAEVLE (168 aa)) is the tr-type G domain. The segment at 324–331 (GHVDHGKT) is G1. Residue 324–331 (GHVDHGKT) participates in GTP binding. Residues 349–353 (GITQH) form a G2 region. Residues 370–373 (DTPG) are G3. Residues 370-374 (DTPGH) and 424-427 (NKID) contribute to the GTP site. The segment at 424–427 (NKID) is G4. Residues 460–462 (SAY) form a G5 region.

It belongs to the TRAFAC class translation factor GTPase superfamily. Classic translation factor GTPase family. IF-2 subfamily.

The protein resides in the cytoplasm. One of the essential components for the initiation of protein synthesis. Protects formylmethionyl-tRNA from spontaneous hydrolysis and promotes its binding to the 30S ribosomal subunits. Also involved in the hydrolysis of GTP during the formation of the 70S ribosomal complex. The sequence is that of Translation initiation factor IF-2 from Ruthia magnifica subsp. Calyptogena magnifica.